A 114-amino-acid polypeptide reads, in one-letter code: uncharacterized protein (114 aa).

This is an uncharacterized protein from Acanthamoeba polyphaga (Amoeba).